The primary structure comprises 382 residues: Queuine tRNA-ribosyltransferase (382 aa).

The active-site Proton acceptor is aspartate 93. Residues 93-97 (DSGGF), aspartate 147, glutamine 191, and glycine 218 each bind substrate. An RNA binding region spans residues 249-255 (GVGKPED). Catalysis depends on aspartate 268, which acts as the Nucleophile. An RNA binding; important for wobble base 34 recognition region spans residues 273-277 (TRNAR). Positions 306, 308, 311, and 337 each coordinate Zn(2+).

The protein belongs to the queuine tRNA-ribosyltransferase family. Homodimer. Within each dimer, one monomer is responsible for RNA recognition and catalysis, while the other monomer binds to the replacement base PreQ1. Requires Zn(2+) as cofactor.

It catalyses the reaction 7-aminomethyl-7-carbaguanine + guanosine(34) in tRNA = 7-aminomethyl-7-carbaguanosine(34) in tRNA + guanine. It participates in tRNA modification; tRNA-queuosine biosynthesis. Its function is as follows. Catalyzes the base-exchange of a guanine (G) residue with the queuine precursor 7-aminomethyl-7-deazaguanine (PreQ1) at position 34 (anticodon wobble position) in tRNAs with GU(N) anticodons (tRNA-Asp, -Asn, -His and -Tyr). Catalysis occurs through a double-displacement mechanism. The nucleophile active site attacks the C1' of nucleotide 34 to detach the guanine base from the RNA, forming a covalent enzyme-RNA intermediate. The proton acceptor active site deprotonates the incoming PreQ1, allowing a nucleophilic attack on the C1' of the ribose to form the product. After dissociation, two additional enzymatic reactions on the tRNA convert PreQ1 to queuine (Q), resulting in the hypermodified nucleoside queuosine (7-(((4,5-cis-dihydroxy-2-cyclopenten-1-yl)amino)methyl)-7-deazaguanosine). The protein is Queuine tRNA-ribosyltransferase of Haemophilus influenzae (strain PittEE).